The primary structure comprises 472 residues: Poly(A) polymerase catalytic subunit (472 aa).

Active-site residues include Asp-194 and Asp-196.

This sequence belongs to the poxviridae poly(A) polymerase catalytic subunit family. Heterodimer of a large (catalytic) subunit and a small (regulatory) subunit.

It carries out the reaction RNA(n) + ATP = RNA(n)-3'-adenine ribonucleotide + diphosphate. Polymerase that creates the 3'-poly(A) tail of mRNA's. This Serinus (CNPV) protein is Poly(A) polymerase catalytic subunit (PAPL).